The primary structure comprises 139 residues: Putative pre-16S rRNA nuclease (139 aa).

This sequence belongs to the YqgF nuclease family.

Its subcellular location is the cytoplasm. Could be a nuclease involved in processing of the 5'-end of pre-16S rRNA. The protein is Putative pre-16S rRNA nuclease of Haemophilus influenzae (strain 86-028NP).